Consider the following 88-residue polypeptide: FXYD domain-containing ion transport regulator 4 (88 aa).

An N-terminal signal peptide occupies residues 1-20 (MEEITCAFLLLLAGLPALEA). Residues 21-38 (SDPVDKDSPFYYDWESLQ) are Extracellular-facing. Residues 39-59 (LGGLIFGGLLCIAGIAMALSG) traverse the membrane as a helical segment. The Cytoplasmic segment spans residues 60–88 (KCKCRRTHKPSSLPGKATPLIIPGSANTC).

Belongs to the FXYD family. Regulatory subunit of the sodium/potassium-transporting ATPase which is composed of a catalytic alpha subunit, a non-catalytic beta subunit and a regulatory subunit. The regulatory subunit, a member of the FXYD protein family, modulates the enzymatic activity in a tissue- and isoform-specific way by changing affinities of the Na+/K+-ATPase toward Na(+), K(+) or ATP.

It is found in the cell membrane. The protein resides in the basolateral cell membrane. In terms of biological role, associates with and regulates the activity of the sodium/potassium-transporting ATPase (NKA) which catalyzes the hydrolysis of ATP coupled with the exchange of Na(+) and K(+) ions across the plasma membrane. Increases the apparent affinity of the transporter for Na(+) and increases NKA activity. The polypeptide is FXYD domain-containing ion transport regulator 4 (Fxyd4) (Mus musculus (Mouse)).